A 436-amino-acid polypeptide reads, in one-letter code: Trigger factor (436 aa).

Residues 163–248 form the PPIase FKBP-type domain; the sequence is DDRIVLDFAG…VKEVAEAVLP (86 aa).

Belongs to the FKBP-type PPIase family. Tig subfamily.

Its subcellular location is the cytoplasm. It carries out the reaction [protein]-peptidylproline (omega=180) = [protein]-peptidylproline (omega=0). Involved in protein export. Acts as a chaperone by maintaining the newly synthesized protein in an open conformation. Functions as a peptidyl-prolyl cis-trans isomerase. In Bordetella avium (strain 197N), this protein is Trigger factor.